The following is a 56-amino-acid chain: Keratin-associated protein 20-1 (56 aa).

Belongs to the KRTAP type 20 family. As to quaternary structure, interacts with hair keratins.

Functionally, in the hair cortex, hair keratin intermediate filaments are embedded in an interfilamentous matrix, consisting of hair keratin-associated proteins (KRTAP), which are essential for the formation of a rigid and resistant hair shaft through their extensive disulfide bond cross-linking with abundant cysteine residues of hair keratins. The matrix proteins include the high-sulfur and high-glycine-tyrosine keratins. The chain is Keratin-associated protein 20-1 (KRTAP20-1) from Homo sapiens (Human).